A 193-amino-acid polypeptide reads, in one-letter code: Large ribosomal subunit protein bL21 (193 aa).

The protein belongs to the bacterial ribosomal protein bL21 family. Part of the 50S ribosomal subunit. Contacts protein L20.

Its function is as follows. This protein binds to 23S rRNA in the presence of protein L20. The chain is Large ribosomal subunit protein bL21 from Ruegeria pomeroyi (strain ATCC 700808 / DSM 15171 / DSS-3) (Silicibacter pomeroyi).